A 401-amino-acid chain; its full sequence is Tyrosine--tRNA ligase (401 aa).

The short motif at 42-51 is the 'HIGH' region element; it reads PTAPDLHLGH. A 'KMSKS' region motif is present at residues 226-230; that stretch reads KMSKS. Lysine 229 is a binding site for ATP. The S4 RNA-binding domain maps to 336-397; that stretch reads IALAQLLKQI…GKRRIAKLSI (62 aa).

This sequence belongs to the class-I aminoacyl-tRNA synthetase family. TyrS type 2 subfamily. As to quaternary structure, homodimer.

Its subcellular location is the cytoplasm. It carries out the reaction tRNA(Tyr) + L-tyrosine + ATP = L-tyrosyl-tRNA(Tyr) + AMP + diphosphate + H(+). Catalyzes the attachment of tyrosine to tRNA(Tyr) in a two-step reaction: tyrosine is first activated by ATP to form Tyr-AMP and then transferred to the acceptor end of tRNA(Tyr). This Legionella pneumophila (strain Paris) protein is Tyrosine--tRNA ligase.